Consider the following 266-residue polypeptide: Glucosamine-6-phosphate deaminase (266 aa).

The active-site Proton acceptor; for enolization step is the Asp-72. The active-site For ring-opening step is the Asp-141. The active-site Proton acceptor; for ring-opening step is His-143. The For ring-opening step role is filled by Glu-148.

This sequence belongs to the glucosamine/galactosamine-6-phosphate isomerase family. NagB subfamily. As to quaternary structure, homohexamer.

It carries out the reaction alpha-D-glucosamine 6-phosphate + H2O = beta-D-fructose 6-phosphate + NH4(+). It participates in amino-sugar metabolism; N-acetylneuraminate degradation; D-fructose 6-phosphate from N-acetylneuraminate: step 5/5. Its activity is regulated as follows. Allosterically activated by N-acetylglucosamine 6-phosphate (GlcNAc6P). Functionally, catalyzes the reversible isomerization-deamination of glucosamine 6-phosphate (GlcN6P) to form fructose 6-phosphate (Fru6P) and ammonium ion. The sequence is that of Glucosamine-6-phosphate deaminase from Aliivibrio fischeri (strain ATCC 700601 / ES114) (Vibrio fischeri).